The following is a 1250-amino-acid chain: Cell adhesion molecule-related/down-regulated by oncogenes (1250 aa).

An N-terminal signal peptide occupies residues Met1 to Ser24. At Asp25 to Tyr962 the chain is on the extracellular side. 5 consecutive Ig-like C2-type domains span residues Pro28 to Ser113, Asp119 to Glu203, Pro224 to Thr302, Glu309 to Gln395, and Pro404 to Thr515. Residues Cys49 and Cys96 are joined by a disulfide bond. Asn99, Asn179, Asn286, Asn293, Asn341, and Asn426 each carry an N-linked (GlcNAc...) asparagine glycan. Intrachain disulfides connect Cys140/Cys190 and Cys242/Cys289. 2 disulfides stabilise this stretch: Cys332–Cys379 and Cys425–Cys499. Positions Lys524–Ser534 are enriched in polar residues. The segment at Lys524–Ser547 is disordered. An N-linked (GlcNAc...) asparagine glycan is attached at Asn569. Fibronectin type-III domains lie at Val572 to Lys673, Ala719 to Phe814, and Pro822 to Lys922. An N-linked (GlcNAc...) asparagine glycan is attached at Asn869. Residues Asp929–Ala951 form a disordered region. A helical membrane pass occupies residues Leu963 to Cys983. The Cytoplasmic portion of the chain corresponds to Leu984–Thr1250. Disordered regions lie at residues Asp1178 to Lys1208 and Asp1223 to Thr1250. Residues Glu1193 to Lys1208 show a composition bias toward basic and acidic residues.

Part of a complex that contains BOC, CDON, NEO1, cadherins and CTNNB1. Interacts with NTN3. Interacts with DHH, IHH and SHH. N-glycosylated. As to expression, highly expressed in somites and the dorsal lips of the neural tube during embryogenesis. Detected at very low levels in adult tissues.

The protein resides in the cell membrane. Its function is as follows. Component of a cell-surface receptor complex that mediates cell-cell interactions between muscle precursor cells. Promotes differentiation of myogenic cells. Required for response to NTN3 and activation of NFATC3. The chain is Cell adhesion molecule-related/down-regulated by oncogenes (Cdon) from Mus musculus (Mouse).